Consider the following 447-residue polypeptide: MVRKYFGTDGIRGRANGVITPELALKVGQAAGLVFQRGDHRHRVVIGKDTRLSGYMIETALVAGFTSVGMDVLLLGPVPTPAVAMLTRSMRADLGVMISASHNPFEDNGIKLFGPDGFKLNDAIEHEIEGLIDADMHKRLSGSNDLGRAKRIESVHARYIEFAKRTLPRQVTLDGLRVVVDCANGAAYRVAPETLWELGAEVIAIGTEPDGFNINRDVGSTAPAALIDMVRERRADIGIALDGDADRVLIVDEKGQVVDGDQLMAVVARSWKEDERLTQPGVVATIMSNLGLERFLGGLGLSLARTAVGDRYVLEHMRAHGYNLGGEQSGHIIMSDYTTTGDGLVAALQLLSVVQRQNRPVSEVCHCFDPLPQILKNVRYRSGEPLREDSVVSAIEHARERLGNAGRLVIRPSGTEPVIRVMAEGDDRGLVNAVVDEVVDAVTRAAA.

Residue S101 is the Phosphoserine intermediate of the active site. Positions 101, 242, 244, and 246 each coordinate Mg(2+). Position 101 is a phosphoserine (S101).

Belongs to the phosphohexose mutase family. The cofactor is Mg(2+). In terms of processing, activated by phosphorylation.

The enzyme catalyses alpha-D-glucosamine 1-phosphate = D-glucosamine 6-phosphate. Functionally, catalyzes the conversion of glucosamine-6-phosphate to glucosamine-1-phosphate. This Methylobacterium radiotolerans (strain ATCC 27329 / DSM 1819 / JCM 2831 / NBRC 15690 / NCIMB 10815 / 0-1) protein is Phosphoglucosamine mutase.